A 476-amino-acid chain; its full sequence is ATP synthase subunit beta, chloroplastic (476 aa).

Residue 153-160 (GGAGVGKT) coordinates ATP.

It belongs to the ATPase alpha/beta chains family. In terms of assembly, F-type ATPases have 2 components, CF(1) - the catalytic core - and CF(0) - the membrane proton channel. CF(1) has five subunits: alpha(3), beta(3), gamma(1), delta(1), epsilon(1). CF(0) has four main subunits: a(1), b(1), b'(1) and c(9-12).

It is found in the plastid. The protein localises to the chloroplast thylakoid membrane. It catalyses the reaction ATP + H2O + 4 H(+)(in) = ADP + phosphate + 5 H(+)(out). Functionally, produces ATP from ADP in the presence of a proton gradient across the membrane. The catalytic sites are hosted primarily by the beta subunits. This is ATP synthase subunit beta, chloroplastic from Dicksonia antarctica (Australian tree fern).